The following is a 379-amino-acid chain: Alanine racemase (379 aa).

Catalysis depends on Lys-41, which acts as the Proton acceptor; specific for D-alanine. N6-(pyridoxal phosphate)lysine is present on Lys-41. Arg-138 lines the substrate pocket. The active-site Proton acceptor; specific for L-alanine is Tyr-260. Met-319 is a substrate binding site.

This sequence belongs to the alanine racemase family. The cofactor is pyridoxal 5'-phosphate.

It catalyses the reaction L-alanine = D-alanine. It functions in the pathway amino-acid biosynthesis; D-alanine biosynthesis; D-alanine from L-alanine: step 1/1. In terms of biological role, catalyzes the interconversion of L-alanine and D-alanine. May also act on other amino acids. This chain is Alanine racemase (alr), found in Rhizobium meliloti (strain 1021) (Ensifer meliloti).